A 134-amino-acid polypeptide reads, in one-letter code: Large ribosomal subunit protein uL22 (134 aa).

This sequence belongs to the universal ribosomal protein uL22 family. In terms of assembly, part of the 50S ribosomal subunit.

Its function is as follows. This protein binds specifically to 23S rRNA; its binding is stimulated by other ribosomal proteins, e.g. L4, L17, and L20. It is important during the early stages of 50S assembly. It makes multiple contacts with different domains of the 23S rRNA in the assembled 50S subunit and ribosome. Functionally, the globular domain of the protein is located near the polypeptide exit tunnel on the outside of the subunit, while an extended beta-hairpin is found that lines the wall of the exit tunnel in the center of the 70S ribosome. This is Large ribosomal subunit protein uL22 from Rhodococcus erythropolis (strain PR4 / NBRC 100887).